Here is a 132-residue protein sequence, read N- to C-terminus: Fumarate reductase subunit C (132 aa).

3 helical membrane-spanning segments follow: residues 30–50 (ATSVFAVWFCIVLLYGVLCFA), 70–90 (IVVFLNIITLIATLYHTVTYF), and 110–130 (VVRNALWAVTALVSVIALVLV).

This sequence belongs to the FrdC family. Part of an enzyme complex containing four subunits: a flavoprotein (FrdA), an iron-sulfur protein (FrdB), and two hydrophobic anchor proteins (FrdC and FrdD).

The protein localises to the cell inner membrane. Functionally, anchors the catalytic components of the fumarate reductase complex to the cell membrane, binds quinones. The chain is Fumarate reductase subunit C from Haemophilus influenzae (strain ATCC 51907 / DSM 11121 / KW20 / Rd).